We begin with the raw amino-acid sequence, 346 residues long: UDP-3-O-acylglucosamine N-acyltransferase (346 aa).

H240 (proton acceptor) is an active-site residue.

It belongs to the transferase hexapeptide repeat family. LpxD subfamily. Homotrimer.

It carries out the reaction a UDP-3-O-[(3R)-3-hydroxyacyl]-alpha-D-glucosamine + a (3R)-hydroxyacyl-[ACP] = a UDP-2-N,3-O-bis[(3R)-3-hydroxyacyl]-alpha-D-glucosamine + holo-[ACP] + H(+). It participates in bacterial outer membrane biogenesis; LPS lipid A biosynthesis. Catalyzes the N-acylation of UDP-3-O-acylglucosamine using 3-hydroxyacyl-ACP as the acyl donor. Is involved in the biosynthesis of lipid A, a phosphorylated glycolipid that anchors the lipopolysaccharide to the outer membrane of the cell. The sequence is that of UDP-3-O-acylglucosamine N-acyltransferase from Phocaeicola vulgatus (strain ATCC 8482 / DSM 1447 / JCM 5826 / CCUG 4940 / NBRC 14291 / NCTC 11154) (Bacteroides vulgatus).